Consider the following 259-residue polypeptide: Small ribosomal subunit protein eS1 (259 aa).

This sequence belongs to the eukaryotic ribosomal protein eS1 family. As to quaternary structure, component of the small ribosomal subunit. Mature ribosomes consist of a small (40S) and a large (60S) subunit. The 40S subunit contains about 33 different proteins and 1 molecule of RNA (18S). The 60S subunit contains about 49 different proteins and 3 molecules of RNA (25S, 5.8S and 5S).

The protein resides in the cytoplasm. The polypeptide is Small ribosomal subunit protein eS1 (Monosiga brevicollis (Choanoflagellate)).